We begin with the raw amino-acid sequence, 1037 residues long: Signal-induced proliferation-associated protein 1 (1037 aa).

The interval M1–R85 is disordered. T62 carries the phosphothreonine modification. Phosphoserine is present on residues S65, S178, S299, and S309. Positions L316–L534 constitute a Rap-GAP domain. Residues E682 to E758 form the PDZ domain. Residues S812 and S834 each carry the phosphoserine modification. Disordered stretches follow at residues H830 to T849 and L855 to L898. A compositionally biased stretch (low complexity) spans P871–S881. S907 carries the phosphoserine modification. Residues R943–L969 form a disordered region. A compositionally biased stretch (basic and acidic residues) spans G952 to S962. The stretch at S968–A1025 forms a coiled coil.

In terms of assembly, interacts with RRP1B; the interaction leads to inhibition of SIPA1 GTPase activity. Preferentially expressed in both fetal and adult lymphohematopoietic tissues.

The protein resides in the nucleus. Its subcellular location is the cytoplasm. It is found in the perinuclear region. It localises to the endomembrane system. In terms of biological role, GTPase activator for the nuclear Ras-related regulatory proteins Rap1, Rsr1 and Ran in vitro, converting them to the putatively inactive GDP-bound state. Affects cell cycle progression. In Mus musculus (Mouse), this protein is Signal-induced proliferation-associated protein 1 (Sipa1).